The sequence spans 247 residues: Uridylate kinase (247 aa).

18–21 is an ATP binding site; sequence KLSG. Gly-60 provides a ligand contact to UMP. 2 residues coordinate ATP: Gly-61 and Arg-65. UMP is bound by residues Asp-80 and 141–148; that span reads TGNPFFTT. Residues Thr-168, Tyr-174, and Asp-177 each contribute to the ATP site.

Belongs to the UMP kinase family. Homohexamer.

It is found in the cytoplasm. The catalysed reaction is UMP + ATP = UDP + ADP. The protein operates within pyrimidine metabolism; CTP biosynthesis via de novo pathway; UDP from UMP (UMPK route): step 1/1. Inhibited by UTP. Its function is as follows. Catalyzes the reversible phosphorylation of UMP to UDP. This chain is Uridylate kinase, found in Stutzerimonas stutzeri (strain A1501) (Pseudomonas stutzeri).